The sequence spans 258 residues: L-aminoadipate-semialdehyde dehydrogenase-phosphopantetheinyl transferase (258 aa).

It belongs to the P-Pant transferase superfamily. AcpS family.

The protein resides in the cytoplasm. It is found in the nucleus. The enzyme catalyses apo-[ACP] + CoA = holo-[ACP] + adenosine 3',5'-bisphosphate + H(+). Functionally, catalyzes the transfer of a 4'-phosphopantetheine moiety from coenzyme A to a serine residue of acceptor proteins, such as alpha-aminoadipate reductase. Necessary for alpha-aminoadipate reductase activity. This chain is L-aminoadipate-semialdehyde dehydrogenase-phosphopantetheinyl transferase (lys7), found in Schizosaccharomyces pombe (strain 972 / ATCC 24843) (Fission yeast).